Here is a 763-residue protein sequence, read N- to C-terminus: Phosphoglycerol transferase I (763 aa).

A run of 4 helical transmembrane segments spans residues 1–21 (MSELLSFALFLASVLIYAWKA), 26–46 (WWFAATLTVLGLFVVLNITLF), 77–97 (ILPGIGIVLGLTAVFGALGWI), and 108–128 (FGYSLLALLLALGSVDASPAF).

The protein belongs to the OpgB family.

The protein resides in the cell inner membrane. It carries out the reaction a phosphatidylglycerol + a membrane-derived-oligosaccharide D-glucose = a 1,2-diacyl-sn-glycerol + a membrane-derived-oligosaccharide 6-(glycerophospho)-D-glucose.. It participates in glycan metabolism; osmoregulated periplasmic glucan (OPG) biosynthesis. Its function is as follows. Transfers a phosphoglycerol residue from phosphatidylglycerol to the membrane-bound nascent glucan backbones. The polypeptide is Phosphoglycerol transferase I (Escherichia coli (strain SE11)).